Consider the following 100-residue polypeptide: Nucleoid-associated protein ckrop_0143 (100 aa).

The protein belongs to the YbaB/EbfC family. As to quaternary structure, homodimer.

The protein resides in the cytoplasm. It is found in the nucleoid. Binds to DNA and alters its conformation. May be involved in regulation of gene expression, nucleoid organization and DNA protection. The sequence is that of Nucleoid-associated protein ckrop_0143 from Corynebacterium kroppenstedtii (strain DSM 44385 / JCM 11950 / CIP 105744 / CCUG 35717).